A 351-amino-acid polypeptide reads, in one-letter code: Dihydroorotate dehydrogenase (quinone) (351 aa).

Residues 67–71 (AGFDK) and threonine 91 each bind FMN. Lysine 71 is a binding site for substrate. 116-120 (NAMGF) is a substrate binding site. FMN is bound by residues asparagine 145 and asparagine 178. Substrate is bound at residue asparagine 178. The active-site Nucleophile is the serine 181. Substrate is bound at residue asparagine 183. Lysine 214 and threonine 242 together coordinate FMN. Substrate is bound at residue 243–244 (NT). FMN-binding positions include glycine 262, glycine 291, and 312–313 (YS).

The protein belongs to the dihydroorotate dehydrogenase family. Type 2 subfamily. As to quaternary structure, monomer. FMN serves as cofactor.

It is found in the cell membrane. It catalyses the reaction (S)-dihydroorotate + a quinone = orotate + a quinol. Its pathway is pyrimidine metabolism; UMP biosynthesis via de novo pathway; orotate from (S)-dihydroorotate (quinone route): step 1/1. Functionally, catalyzes the conversion of dihydroorotate to orotate with quinone as electron acceptor. The polypeptide is Dihydroorotate dehydrogenase (quinone) (pyrD) (Helicobacter pylori (strain J99 / ATCC 700824) (Campylobacter pylori J99)).